A 430-amino-acid polypeptide reads, in one-letter code: Adenylosuccinate synthetase (430 aa).

GTP contacts are provided by residues glycine 12–lysine 18 and glycine 40–threonine 42. Residue aspartate 13 is the Proton acceptor of the active site. Positions 13 and 40 each coordinate Mg(2+). Residues aspartate 13–lysine 16, asparagine 38–histidine 41, threonine 130, arginine 144, glutamine 224, threonine 239, and arginine 303 contribute to the IMP site. The Proton donor role is filled by histidine 41. Substrate is bound at residue threonine 299–arginine 305. GTP contacts are provided by residues arginine 305, lysine 331–aspartate 333, and serine 413–serine 415.

The protein belongs to the adenylosuccinate synthetase family. As to quaternary structure, homodimer. Mg(2+) is required as a cofactor.

Its subcellular location is the cytoplasm. The enzyme catalyses IMP + L-aspartate + GTP = N(6)-(1,2-dicarboxyethyl)-AMP + GDP + phosphate + 2 H(+). Its pathway is purine metabolism; AMP biosynthesis via de novo pathway; AMP from IMP: step 1/2. In terms of biological role, plays an important role in the de novo pathway of purine nucleotide biosynthesis. Catalyzes the first committed step in the biosynthesis of AMP from IMP. This Cereibacter sphaeroides (strain ATCC 17023 / DSM 158 / JCM 6121 / CCUG 31486 / LMG 2827 / NBRC 12203 / NCIMB 8253 / ATH 2.4.1.) (Rhodobacter sphaeroides) protein is Adenylosuccinate synthetase.